A 131-amino-acid polypeptide reads, in one-letter code: uncharacterized protein (131 aa).

A CMP/dCMP-type deaminase domain is found at 1 to 116 (MYMARMLSEM…EMLEASSIQC (116 aa)).

This is an uncharacterized protein from Caenorhabditis elegans.